The primary structure comprises 447 residues: N-succinylarginine dihydrolase (447 aa).

Substrate-binding positions include 19 to 28, Asn-110, and 137 to 138; these read AGLSFGNEAS and HR. Glu-174 is a catalytic residue. Residue Arg-212 participates in substrate binding. His-248 is an active-site residue. Substrate contacts are provided by Asp-250 and Asn-359. Cys-365 (nucleophile) is an active-site residue.

This sequence belongs to the succinylarginine dihydrolase family. As to quaternary structure, homodimer.

It carries out the reaction N(2)-succinyl-L-arginine + 2 H2O + 2 H(+) = N(2)-succinyl-L-ornithine + 2 NH4(+) + CO2. It participates in amino-acid degradation; L-arginine degradation via AST pathway; L-glutamate and succinate from L-arginine: step 2/5. Functionally, catalyzes the hydrolysis of N(2)-succinylarginine into N(2)-succinylornithine, ammonia and CO(2). In Salmonella agona (strain SL483), this protein is N-succinylarginine dihydrolase.